The following is a 338-amino-acid chain: uncharacterized protein (338 aa).

This is an uncharacterized protein from Schizosaccharomyces pombe (strain 972 / ATCC 24843) (Fission yeast).